We begin with the raw amino-acid sequence, 484 residues long: Replication-associated protein (484 aa).

A Nuclear localization signal motif is present at residues 146–153; that stretch reads IRKYHQSV.

The protein resides in the host nucleus. Functionally, plays an essential for the replication of viral DNA. Presumably cleaves viral genomic dsRNA replicative form to initiate rolling circle replication. The chain is Replication-associated protein from Chaetoceros (Chaetoceros sp. DNA virus 7).